The following is a 737-amino-acid chain: Transcription termination factor Rho (737 aa).

Residues 1-396 form a disordered region; it reads MSGPCSAHRV…ENSYLPDPTD (396 aa). Low complexity-rich tracts occupy residues 16 to 28, 62 to 86, and 101 to 111; these read RPTI…TRSS, ASRA…GSDA, and DAESAPTAADT. 4 stretches are compositionally biased toward basic and acidic residues: residues 145–175, 196–256, 266–279, and 286–324; these read PRAE…HESR, SMER…DRRD, GRPD…DRHQ, and DRSH…DRGG. Over residues 328-339 the composition is skewed to basic residues; that stretch reads RNGRRGRNRFRR. Residues 347–360 show a composition bias toward polar residues; it reads APISGSHAPSQGSP. The Rho RNA-BD domain maps to 367–439; that stretch reads EGTMAGWFDP…IEVQTLNDGS (73 aa). Positions 376 to 387 are enriched in basic and acidic residues; sequence PSRDGGFLRRPE. ATP contacts are provided by residues 487–492, 499–504, and Arg530; these read GYGQRA and RAGKTT.

This sequence belongs to the Rho family. As to quaternary structure, homohexamer. The homohexamer assembles into an open ring structure.

Its function is as follows. Facilitates transcription termination by a mechanism that involves Rho binding to the nascent RNA, activation of Rho's RNA-dependent ATPase activity, and release of the mRNA from the DNA template. This is Transcription termination factor Rho from Gemmatimonas aurantiaca (strain DSM 14586 / JCM 11422 / NBRC 100505 / T-27).